Consider the following 238-residue polypeptide: tRNA (guanine-N(7)-)-methyltransferase (238 aa).

The S-adenosyl-L-methionine site is built by glutamate 68, glutamate 93, aspartate 120, and aspartate 143. The active site involves aspartate 143. Residues lysine 147, aspartate 179, and 216–219 (TKFE) contribute to the substrate site.

The protein belongs to the class I-like SAM-binding methyltransferase superfamily. TrmB family.

It catalyses the reaction guanosine(46) in tRNA + S-adenosyl-L-methionine = N(7)-methylguanosine(46) in tRNA + S-adenosyl-L-homocysteine. It functions in the pathway tRNA modification; N(7)-methylguanine-tRNA biosynthesis. Its function is as follows. Catalyzes the formation of N(7)-methylguanine at position 46 (m7G46) in tRNA. The polypeptide is tRNA (guanine-N(7)-)-methyltransferase (Shewanella amazonensis (strain ATCC BAA-1098 / SB2B)).